Consider the following 313-residue polypeptide: tRNA dimethylallyltransferase (313 aa).

Residue 9 to 16 (GPTASGKT) participates in ATP binding. Residue 11–16 (TASGKT) coordinates substrate. Positions 34–37 (DSMQ) are interaction with substrate tRNA.

The protein belongs to the IPP transferase family. Monomer. It depends on Mg(2+) as a cofactor.

It catalyses the reaction adenosine(37) in tRNA + dimethylallyl diphosphate = N(6)-dimethylallyladenosine(37) in tRNA + diphosphate. Functionally, catalyzes the transfer of a dimethylallyl group onto the adenine at position 37 in tRNAs that read codons beginning with uridine, leading to the formation of N6-(dimethylallyl)adenosine (i(6)A). The protein is tRNA dimethylallyltransferase of Acetivibrio thermocellus (strain ATCC 27405 / DSM 1237 / JCM 9322 / NBRC 103400 / NCIMB 10682 / NRRL B-4536 / VPI 7372) (Clostridium thermocellum).